The primary structure comprises 576 residues: Peptidoglycan D,D-transpeptidase FtsI (576 aa).

The helical transmembrane segment at Ile-22–Phe-42 threads the bilayer. Ser-308 serves as the catalytic Acyl-ester intermediate.

It belongs to the transpeptidase family. FtsI subfamily.

The protein localises to the cell inner membrane. The enzyme catalyses Preferential cleavage: (Ac)2-L-Lys-D-Ala-|-D-Ala. Also transpeptidation of peptidyl-alanyl moieties that are N-acyl substituents of D-alanine.. It functions in the pathway cell wall biogenesis; peptidoglycan biosynthesis. In terms of biological role, catalyzes cross-linking of the peptidoglycan cell wall at the division septum. The chain is Peptidoglycan D,D-transpeptidase FtsI from Buchnera aphidicola subsp. Baizongia pistaciae (strain Bp).